Consider the following 195-residue polypeptide: U8 snoRNA-decapping enzyme (195 aa).

Positions 18 to 173 constitute a Nudix hydrolase domain; that stretch reads DWRHACHALL…IGAAREQLLE (156 aa). Residues histidine 24, arginine 50, and phenylalanine 57 each contribute to the substrate site. Residues glycine 59, glutamate 76, glutamate 80, and histidine 99 each contribute to the Mn(2+) site. The Nudix box signature appears at 61-82; it reads FVDAQDSCLEDGLNRELREELG. Glutamine 170 is a substrate binding site. Glutamate 173 contributes to the Mn(2+) binding site.

The protein belongs to the Nudix hydrolase family. NUDT16 subfamily. Homodimer. Mg(2+) is required as a cofactor. It depends on Mn(2+) as a cofactor. Co(2+) serves as cofactor. Expressed in brain, testis, spleen, lung, heart, liver, kidney and muscle (at protein level).

It is found in the nucleus. The protein resides in the nucleolus. It localises to the nucleoplasm. The protein localises to the cytoplasm. The enzyme catalyses a 5'-end (N(7)-methyl 5'-triphosphoguanosine)-ribonucleoside in mRNA + H2O = N(7)-methyl-GDP + a 5'-end phospho-ribonucleoside in mRNA + 2 H(+). The catalysed reaction is IDP + H2O = IMP + phosphate + H(+). It catalyses the reaction dIDP + H2O = dIMP + phosphate + H(+). It carries out the reaction a 5'-end NAD(+)-phospho-ribonucleoside in mRNA + H2O = a 5'-end phospho-ribonucleoside in mRNA + NAD(+) + H(+). The enzyme catalyses a 5'-end FAD-phospho-ribonucleoside in mRNA + H2O = a 5'-end phospho-adenosine-phospho-ribonucleoside in mRNA + FMN + 2 H(+). The catalysed reaction is a 5'-end CoA-ribonucleoside in mRNA + H2O = a 5'-end phospho-adenosine-phospho-ribonucleoside in mRNA + (R)-4'-phosphopantetheine + 2 H(+). RNA-binding and decapping enzyme that catalyzes the cleavage of the cap structure of snoRNAs and mRNAs in a metal-dependent manner. Part of the U8 snoRNP complex that is required for the accumulation of mature 5.8S and 28S rRNA. Has diphosphatase activity and removes m7G and/or m227G caps from U8 snoRNA and leaves a 5'monophosphate on the RNA. Also catalyzes the cleavage of the cap structure on mRNAs. Does not hydrolyze cap analog structures like 7-methylguanosine nucleoside triphosphate (m7GpppG). Also hydrolysis m7G- and m227G U3-capped RNAs but with less efficiencies. Has broad substrate specificity with manganese or cobalt as cofactor and can act on various RNA species. Binds to the U8 snoRNA; metal is not required for RNA-binding. May play a role in the regulation of snoRNAs and mRNAs degradation. Also acts as a phosphatase; hydrolyzes the non-canonical purine nucleotides inosine diphosphate (IDP) and deoxyinosine diphosphate (dITP) as well as guanosine diphosphate (GDP), deoxyguanosine diphosphate (dGDP), xanthine diphosphate (XDP), inosine triphosphate (ITP) and deoxyinosine triphosphate (ITP) to their respective monophosphate derivatives and does not distinguish between the deoxy- and ribose forms. The order of activity with different substrates is IDP &gt; dIDP &gt;&gt; GDP = dGDP &gt; XDP = ITP = dITP. Binds strongly to GTP, ITP and XTP. Participates in the hydrolysis of dIDP/IDP and probably excludes non-canonical purines from RNA and DNA precursor pools, thus preventing their incorporation into RNA and DNA and avoiding chromosomal lesions. Exhibits decapping activity towards NAD-capped RNAs and FAD-capped RNAs. Exhibits decapping activity towards dpCoA-capped RNAs in vitro. This chain is U8 snoRNA-decapping enzyme (Nudt16), found in Mus musculus (Mouse).